A 429-amino-acid chain; its full sequence is TNFAIP3-interacting protein 2 (429 aa).

Serine 7 is modified (phosphoserine). Positions 29–117 (QRLRRLQDQL…MQQLLSQPQH (89 aa)) form a coiled coil. Residues 177–195 (HAQRNVGERSPDQSEHTDG) are compositionally biased toward basic and acidic residues. The segment at 177–199 (HAQRNVGERSPDQSEHTDGHTSV) is disordered. Coiled coils occupy residues 196–226 (HTSV…LNAK) and 255–340 (ELMR…QVSW). A ubiquitin-binding domain (UBD) region spans residues 289–347 (RDAALERVQMLEQQILAYKDDFMSERADRERAQSRIQELEEKVASLLHQVSWRQDSREP). Residues 372–400 (PGGWRPGTGSQQPEPPAEGGHPGAAQRGQ) are disordered. Positions 388–397 (AEGGHPGAAQ) are enriched in low complexity. The CCHC NOA-type zinc-finger motif lies at 397–429 (QRGQGDLQCPHCLQCFSDEQGEELLRHVAECCQ). Positions 405, 408, 423, and 427 each coordinate Zn(2+).

In terms of assembly, interacts with STK11/LKB1, TNFAIP3, IKBKG, NFKB1, MAP3K8, TEK, RIPK1, CHUK, IKBKB and SMARCD1. Interacts with polyubiquitin. As to quaternary structure, (Microbial infection) Interacts with severe fever with thrombocytopenia syndrome virus (SFTSV) NSs; this interaction promotes TPL2 complex formation and signaling activity leading to IL-10 production. In terms of processing, in vitro phosphorylated by CHUK. Post-translationally, ubiquitinated; undergoes 'Lys-48'-linked polyubiquitination probably leading to constitutive proteasomal degradation which can be impaired by IKK-A/CHUK or IKBKB probably involving deubiquitination. Deubiquitinated by USP35; leading to stabilization and inhibition of TNFalpha-induced NF-kappa-B activation. As to expression, ubiquitously expressed in all tissues examined.

The protein localises to the cytoplasm. Its subcellular location is the nucleus. Its function is as follows. Inhibits NF-kappa-B activation by blocking the interaction of RIPK1 with its downstream effector NEMO/IKBKG. Forms a ternary complex with NFKB1 and MAP3K8 but appears to function upstream of MAP3K8 in the TLR4 signaling pathway that regulates MAP3K8 activation. Involved in activation of the MEK/ERK signaling pathway during innate immune response; this function seems to be stimulus- and cell type specific. Required for stability of MAP3K8. Involved in regulation of apoptosis in endothelial cells; promotes TEK agonist-stimulated endothelial survival. May act as transcriptional coactivator when translocated to the nucleus. Enhances CHUK-mediated NF-kappa-B activation involving NF-kappa-B p50-p65 and p50-c-Rel complexes. This Homo sapiens (Human) protein is TNFAIP3-interacting protein 2.